Reading from the N-terminus, the 270-residue chain is Undecaprenyl-diphosphatase 1 (270 aa).

The next 6 helical transmembrane spans lie at 41 to 61 (IEGF…VLLV), 88 to 108 (FRFI…GVLF), 117 to 137 (KDGV…LFLI), 192 to 212 (FSFL…ITDI), 218 to 238 (LGEL…ATYF), and 250 to 270 (GNLV…LIFA).

It belongs to the UppP family.

The protein resides in the cell membrane. It catalyses the reaction di-trans,octa-cis-undecaprenyl diphosphate + H2O = di-trans,octa-cis-undecaprenyl phosphate + phosphate + H(+). Its function is as follows. Catalyzes the dephosphorylation of undecaprenyl diphosphate (UPP). Confers resistance to bacitracin. This is Undecaprenyl-diphosphatase 1 from Bacillus licheniformis (strain ATCC 14580 / DSM 13 / JCM 2505 / CCUG 7422 / NBRC 12200 / NCIMB 9375 / NCTC 10341 / NRRL NRS-1264 / Gibson 46).